A 157-amino-acid polypeptide reads, in one-letter code: MNLTHLDEKNHPKMVDVSQKNITQREACASGKIYMSKEAFEAIITNTAKKGPVLQTAITAAIMGAKQTSNLIPMCHPLMISKVQTHIEENKEECSFKLFVTVKCEGKTGVEMESLTAVSIGLLTIYDMIKAIDKSMQITDIVLESKEGGKSGKYLRS.

Substrate contacts are provided by residues 74–76 (MCH) and 112–113 (ME). Residue Asp127 is part of the active site.

Belongs to the MoaC family. In terms of assembly, homohexamer; trimer of dimers.

The catalysed reaction is (8S)-3',8-cyclo-7,8-dihydroguanosine 5'-triphosphate = cyclic pyranopterin phosphate + diphosphate. It participates in cofactor biosynthesis; molybdopterin biosynthesis. In terms of biological role, catalyzes the conversion of (8S)-3',8-cyclo-7,8-dihydroguanosine 5'-triphosphate to cyclic pyranopterin monophosphate (cPMP). This Campylobacter lari (strain RM2100 / D67 / ATCC BAA-1060) protein is Cyclic pyranopterin monophosphate synthase.